The sequence spans 558 residues: Aspartate--tRNA ligase 2, cytoplasmic (558 aa).

Low complexity predominate over residues 1–18 (MSSESEIPPLSSSTAAAE). Residues 1–57 (MSSESEIPPLSSSTAAAEESGEKTSKKAAKKEAAKLEKLRRRQEQEEATRRTASISL) form a disordered region. Serine 2 is modified (N-acetylserine). Residues 20–50 (SGEKTSKKAAKKEAAKLEKLRRRQEQEEATR) show a composition bias toward basic and acidic residues. Positions 110-195 (VLIRGRVHTN…QVEIQVRKVY (86 aa)) form a DNA-binding region, OB. Position 286 (glutamate 286) interacts with L-aspartate. The segment at 308–311 (QLHK) is aspartate. Arginine 330 serves as a coordination point for L-aspartate. ATP-binding positions include 330-332 (RAE), 338-340 (RHL), and glutamate 481. Positions 481 and 484 each coordinate Mg(2+). The L-aspartate site is built by serine 484 and arginine 488. 529 to 532 (GLER) provides a ligand contact to ATP.

It belongs to the class-II aminoacyl-tRNA synthetase family. Type 2 subfamily.

It localises to the cytoplasm. The protein resides in the cytosol. The protein localises to the endoplasmic reticulum. The catalysed reaction is tRNA(Asp) + L-aspartate + ATP = L-aspartyl-tRNA(Asp) + AMP + diphosphate. Its function is as follows. Catalyzes the specific attachment of an amino acid to its cognate tRNA in a 2 step reaction: the amino acid (AA) is first activated by ATP to form AA-AMP and then transferred to the acceptor end of the tRNA. Involved in the perception of beta-aminobutyric acid (BABA) and required for BABA priming effect in disease resistance. This Arabidopsis thaliana (Mouse-ear cress) protein is Aspartate--tRNA ligase 2, cytoplasmic.